The following is a 362-amino-acid chain: UDP-N-acetylglucosamine--N-acetylmuramyl-(pentapeptide) pyrophosphoryl-undecaprenol N-acetylglucosamine transferase (362 aa).

UDP-N-acetyl-alpha-D-glucosamine contacts are provided by residues 15–17 (TGG), Asn-127, Arg-165, Ser-191, Ile-247, 266–271 (ALTVSE), and Gln-292.

It belongs to the glycosyltransferase 28 family. MurG subfamily.

It localises to the cell inner membrane. It catalyses the reaction di-trans,octa-cis-undecaprenyl diphospho-N-acetyl-alpha-D-muramoyl-L-alanyl-D-glutamyl-meso-2,6-diaminopimeloyl-D-alanyl-D-alanine + UDP-N-acetyl-alpha-D-glucosamine = di-trans,octa-cis-undecaprenyl diphospho-[N-acetyl-alpha-D-glucosaminyl-(1-&gt;4)]-N-acetyl-alpha-D-muramoyl-L-alanyl-D-glutamyl-meso-2,6-diaminopimeloyl-D-alanyl-D-alanine + UDP + H(+). The protein operates within cell wall biogenesis; peptidoglycan biosynthesis. In terms of biological role, cell wall formation. Catalyzes the transfer of a GlcNAc subunit on undecaprenyl-pyrophosphoryl-MurNAc-pentapeptide (lipid intermediate I) to form undecaprenyl-pyrophosphoryl-MurNAc-(pentapeptide)GlcNAc (lipid intermediate II). In Shewanella baltica (strain OS155 / ATCC BAA-1091), this protein is UDP-N-acetylglucosamine--N-acetylmuramyl-(pentapeptide) pyrophosphoryl-undecaprenol N-acetylglucosamine transferase.